A 502-amino-acid chain; its full sequence is Aspartyl/glutamyl-tRNA(Asn/Gln) amidotransferase subunit B (502 aa).

The segment at threonine 272–aspartate 293 is disordered.

This sequence belongs to the GatB/GatE family. GatB subfamily. Heterotrimer of A, B and C subunits.

The catalysed reaction is L-glutamyl-tRNA(Gln) + L-glutamine + ATP + H2O = L-glutaminyl-tRNA(Gln) + L-glutamate + ADP + phosphate + H(+). It carries out the reaction L-aspartyl-tRNA(Asn) + L-glutamine + ATP + H2O = L-asparaginyl-tRNA(Asn) + L-glutamate + ADP + phosphate + 2 H(+). Its function is as follows. Allows the formation of correctly charged Asn-tRNA(Asn) or Gln-tRNA(Gln) through the transamidation of misacylated Asp-tRNA(Asn) or Glu-tRNA(Gln) in organisms which lack either or both of asparaginyl-tRNA or glutaminyl-tRNA synthetases. The reaction takes place in the presence of glutamine and ATP through an activated phospho-Asp-tRNA(Asn) or phospho-Glu-tRNA(Gln). This Paenarthrobacter aurescens (strain TC1) protein is Aspartyl/glutamyl-tRNA(Asn/Gln) amidotransferase subunit B.